The primary structure comprises 492 residues: 2-succinylbenzoate--CoA ligase (492 aa).

The protein belongs to the ATP-dependent AMP-binding enzyme family. MenE subfamily.

It catalyses the reaction 2-succinylbenzoate + ATP + CoA = 2-succinylbenzoyl-CoA + AMP + diphosphate. The protein operates within quinol/quinone metabolism; 1,4-dihydroxy-2-naphthoate biosynthesis; 1,4-dihydroxy-2-naphthoate from chorismate: step 5/7. It participates in quinol/quinone metabolism; menaquinone biosynthesis. Its function is as follows. Converts 2-succinylbenzoate (OSB) to 2-succinylbenzoyl-CoA (OSB-CoA). The sequence is that of 2-succinylbenzoate--CoA ligase from Staphylococcus aureus (strain MSSA476).